We begin with the raw amino-acid sequence, 401 residues long: (1R,4R,5S)-(-)-guaia-6,10(14)-diene synthase (401 aa).

Residues 1–21 (MVKFDSGSESEMTNGDDLHIN) form a disordered region. Mg(2+) is bound by residues Asp-134 and Glu-139. The DDXXD motif signature appears at 134 to 138 (DDQFD). Arg-242 is a substrate binding site. Residues Asn-288 and Ser-292 each contribute to the Mg(2+) site. Lys-295 contributes to the substrate binding site. A Mg(2+)-binding site is contributed by Asp-296. Residue 375-376 (RY) coordinates substrate.

This sequence belongs to the terpene synthase family. Mg(2+) serves as cofactor.

It carries out the reaction (2E,6E)-farnesyl diphosphate = (1R,4R,5S)-(-)-guaia-6,10(14)-diene + diphosphate. Its pathway is secondary metabolite biosynthesis; terpenoid biosynthesis. Its function is as follows. Catalyzes the conversion of (2E,6E)-farnesyl diphosphate (FPP) to yield the bicyclic sesquiterpene guaia-6,10(14)-diene via a 1,10-cyclization, which requires the abstraction of the pyrophosphate from FPP to yield the (E,E)-germacradienyl cation. The only accepted substrate is farnesyl diphosphate (FPP). This Fusarium proliferatum (strain ET1) (Orchid endophyte fungus) protein is (1R,4R,5S)-(-)-guaia-6,10(14)-diene synthase.